Consider the following 512-residue polypeptide: Glycosyltransferase sdnJ (512 aa).

The first 24 residues, 1–24 (MHAKRPSVLFFTISDFGYVNVVLA), serve as a signal peptide directing secretion. Residue Asn-207 is glycosylated (N-linked (GlcNAc...) asparagine).

The protein belongs to the UDP-glycosyltransferase family.

The enzyme catalyses sordaricin + GDP-6-deoxy-alpha-D-altrose = 4'-O-demethylsordarin + GDP + H(+). It participates in antibiotic biosynthesis. Glycosyltransferase; part of the gene cluster that mediates the biosynthesis of sordarin and hypoxysordarin, glycoside antibiotics with a unique tetracyclic diterpene aglycone structure. First, the geranylgeranyl diphosphate synthase sdnC constructs GGDP from farnesyl diphosphate and isopentenyl diphosphate. The diterpene cyclase sdnA then catalyzes the cyclization of GGDP to afford cycloaraneosene. Cycloaraneosene is then hydroxylated four times by the putative cytochrome P450 monooxygenases sdnB, sdnE, sdnF and sdnH to give a hydroxylated cycloaraneosene derivative such as cycloaraneosene-8,9,13,19-tetraol. Although the order of the hydroxylations is unclear, at least C8, C9 and C13 of the cycloaraneosene skeleton are hydroxylated before the sordaricin formation. Dehydration of the 13-hydroxy group of the hydroxylated cycloaraneosene derivative might be catalyzed by an unassigned hypothetical protein such as sdnG and sdnP to construct the cyclopentadiene moiety. The FAD-dependent oxidoreductase sdnN is proposed to catalyze the oxidation at C9 of the hydroxylated cycloaraneosene derivative and also catalyze the Baeyer-Villiger oxidation to give the lactone intermediate. The presumed lactone intermediate would be hydrolyzed to give an acrolein moiety and a carboxylate moiety. Then, [4+2]cycloaddition would occur between the acrolein moiety and the cyclopentadiene moiety to give sordaricin. SdnN might also be involved in the [4+2]cycloaddition after the hypothesized oxidation to accommodate the oxidized product and prompt the [4+2]cycloaddition. GDP-6-deoxy-D-altrose may be biosynthesized from GDP-D-mannose by the putative GDP-mannose-4,6-dehydratase sdnI and the short-chain dehydrogenase sdnK. The glycosyltransferase sdnJ catalyzes the attachment of 6-deoxy-D-altrose onto the 19-hydroxy group of sordaricin to give 4'-O-demethylsordarin. The methyltransferase sdnD would complete the biosynthesis of sordarin. Sordarin can be further modified into hypoxysordarin. The unique acyl chain at the 3'-hydroxy group of hypoxysordarin would be constructed by an iterative type I PKS sdnO and the trans-acting polyketide methyltransferase sdnL. SdnL would be responsible for the introduction of an alpha-methyl group of the polyketide chain. Alternatively, the beta-lactamase-like protein sdnR might be responsible for the cleavage and transfer of the polyketide chain from the PKS sdnO to sordarin. Two putative cytochrome P450 monooxygenases, sdnQ and sdnT, might catalyze the epoxidations of the polyketide chain to complete the biosynthesis of hypoxysordarin. Transcriptional regulators sdnM and sdnS are presumably encoded for the transcriptional regulation of the expression of the sdn gene cluster. This Sordaria araneosa (Pleurage araneosa) protein is Glycosyltransferase sdnJ.